A 78-amino-acid chain; its full sequence is Large ribosomal subunit protein bL28 (78 aa).

The disordered stretch occupies residues Met1–His20.

The protein belongs to the bacterial ribosomal protein bL28 family.

The chain is Large ribosomal subunit protein bL28 from Pseudomonas putida (strain ATCC 700007 / DSM 6899 / JCM 31910 / BCRC 17059 / LMG 24140 / F1).